The primary structure comprises 58 residues: Proteinase inhibitor PSKP-2 (58 aa).

Residues 1–58 form the Kazal-like domain; sequence VIEPDCKKYEGKKCPPDIALVCGTNGREYYNECALCVFIRDSTLKADKAIKIKKWGKC. Cystine bridges form between cysteine 6-cysteine 36, cysteine 14-cysteine 33, and cysteine 22-cysteine 58.

As to expression, skin.

It is found in the secreted. Functionally, may have a role in mucosal defense against microbes by interacting directly with their membranes. In Phyllomedusa sauvagei (Sauvage's leaf frog), this protein is Proteinase inhibitor PSKP-2.